The primary structure comprises 119 residues: Large ribosomal subunit protein uL22 (119 aa).

This sequence belongs to the universal ribosomal protein uL22 family. Part of the 50S ribosomal subunit.

Functionally, this protein binds specifically to 23S rRNA; its binding is stimulated by other ribosomal proteins, e.g. L4, L17, and L20. It is important during the early stages of 50S assembly. It makes multiple contacts with different domains of the 23S rRNA in the assembled 50S subunit and ribosome. Its function is as follows. The globular domain of the protein is located near the polypeptide exit tunnel on the outside of the subunit, while an extended beta-hairpin is found that lines the wall of the exit tunnel in the center of the 70S ribosome. The polypeptide is Large ribosomal subunit protein uL22 (Rickettsia akari (strain Hartford)).